Reading from the N-terminus, the 989-residue chain is Bifunctional glutamine synthetase adenylyltransferase/adenylyl-removing enzyme (989 aa).

Residues 1-473 are adenylyl removase; the sequence is MRGPLEPDSA…HYANLFEDVA (473 aa). An adenylyl transferase region spans residues 479–989; it reads DADLMFPPDE…FERILETAAE (511 aa).

It belongs to the GlnE family. It depends on Mg(2+) as a cofactor.

It carries out the reaction [glutamine synthetase]-O(4)-(5'-adenylyl)-L-tyrosine + phosphate = [glutamine synthetase]-L-tyrosine + ADP. The enzyme catalyses [glutamine synthetase]-L-tyrosine + ATP = [glutamine synthetase]-O(4)-(5'-adenylyl)-L-tyrosine + diphosphate. Functionally, involved in the regulation of glutamine synthetase GlnA, a key enzyme in the process to assimilate ammonia. When cellular nitrogen levels are high, the C-terminal adenylyl transferase (AT) inactivates GlnA by covalent transfer of an adenylyl group from ATP to specific tyrosine residue of GlnA, thus reducing its activity. Conversely, when nitrogen levels are low, the N-terminal adenylyl removase (AR) activates GlnA by removing the adenylyl group by phosphorolysis, increasing its activity. The regulatory region of GlnE binds the signal transduction protein PII (GlnB) which indicates the nitrogen status of the cell. This chain is Bifunctional glutamine synthetase adenylyltransferase/adenylyl-removing enzyme, found in Xanthobacter autotrophicus (strain ATCC BAA-1158 / Py2).